Reading from the N-terminus, the 380-residue chain is Gonadotropin-releasing hormone II receptor (380 aa).

Over 1-40 (MSAVNGTPWGSSAREEVWAGSGVEVEGSELPTFSTAAKVR) the chain is Extracellular. The chain crosses the membrane as a helical span at residues 41-60 (VGVTIVLFVSSAGGNLAVLW). Residues 61–76 (SVTRPQPSQLRPSPVR) lie on the Cytoplasmic side of the membrane. Residues 77–96 (RLFAHLAAADLLVTFVVMPL) form a helical membrane-spanning segment. The Extracellular portion of the chain corresponds to 97 to 114 (DATWNITVQWLAGDIACR). N-linked (GlcNAc...) asparagine glycosylation is present at asparagine 101. An intrachain disulfide couples cysteine 113 to cysteine 188. Residues 115–136 (TLMFLKLMAMYAAAFLPVVIGL) form a helical membrane-spanning segment. The Cytoplasmic portion of the chain corresponds to 137-160 (DRQAAVLNPLGSRSGVRKLLGAAW). A helical transmembrane segment spans residues 161–178 (GLSFLLALPQLFLFHTVH). Residues 179–204 (RAGPVPFTQCATKGSFKARWQETTYN) lie on the Extracellular side of the membrane. The helical transmembrane segment at 205 to 224 (LFTFCCLFLLPLTAMAICYS) threads the bilayer. Over 225 to 278 (RIVLGVSSPRTRKGSHAPAGEFALRRSFDNRPRVRLRALRLALLVLLTFILCWT) the chain is Cytoplasmic. The helical transmembrane segment at 279–297 (PYYLLGLWYWFSPSMLSEV) threads the bilayer. Residues 298 to 303 (PPSLSH) lie on the Extracellular side of the membrane. Residues 304–323 (ILFLFGLLNAPLDPLLYGAF) form a helical membrane-spanning segment. The Cytoplasmic segment spans residues 324-380 (TLGCRRGHQELSMDSSREEGSRRMFQQDIQALRQTEVQKTVTSRKAGETKDIPITSI).

It belongs to the G-protein coupled receptor 1 family. Post-translationally, phosphorylated on the C-terminal cytoplasmic tail.

It is found in the cell membrane. Functionally, receptor for gonadotropin releasing hormone II (GnRH II). This receptor mediates its action by association with G proteins that activate a phosphatidylinositol-calcium second messenger system. In Callithrix jacchus (White-tufted-ear marmoset), this protein is Gonadotropin-releasing hormone II receptor (GNRHR2).